The sequence spans 207 residues: MFIVIEGCEGSGKSSLTELLKNRLITEGKSVIATREPGGSPLGEQVRNWILNPSLPGISPYTELFLFLASRAQHITEKIIPALESGKIVICDRFHDSTIVYQGIAEGLGKEYVTNLCHHVVGEKKFLPDLTCLLDIPVDTGIKRKQQQKSLDKFEDKPLVYHNKIREGFLSLAEANPENYLILDGRQPLEASLNKVMTAYTELALCK.

ATP is bound at residue 7 to 14; that stretch reads GCEGSGKS.

This sequence belongs to the thymidylate kinase family.

It carries out the reaction dTMP + ATP = dTDP + ADP. Functionally, phosphorylation of dTMP to form dTDP in both de novo and salvage pathways of dTTP synthesis. This Chlamydia felis (strain Fe/C-56) (Chlamydophila felis) protein is Thymidylate kinase.